We begin with the raw amino-acid sequence, 76 residues long: Alpha-amylase inhibitor Z-2685 (76 aa).

Intrachain disulfides connect Cys-9–Cys-25 and Cys-43–Cys-70.

Functionally, inhibits mammalian alpha-amylases specifically but has no action on plant and microbial alpha-amylases. The sequence is that of Alpha-amylase inhibitor Z-2685 from Streptomyces rochei (Streptomyces parvullus).